The following is an 88-amino-acid chain: Exodeoxyribonuclease 7 small subunit (88 aa).

The protein belongs to the XseB family. Heterooligomer composed of large and small subunits.

It is found in the cytoplasm. The catalysed reaction is Exonucleolytic cleavage in either 5'- to 3'- or 3'- to 5'-direction to yield nucleoside 5'-phosphates.. Its function is as follows. Bidirectionally degrades single-stranded DNA into large acid-insoluble oligonucleotides, which are then degraded further into small acid-soluble oligonucleotides. The chain is Exodeoxyribonuclease 7 small subunit from Bordetella bronchiseptica (strain ATCC BAA-588 / NCTC 13252 / RB50) (Alcaligenes bronchisepticus).